We begin with the raw amino-acid sequence, 218 residues long: THAP domain-containing protein 3 (218 aa).

The THAP-type zinc finger occupies 1 to 82 (MPKSCAARQC…LKHNAVPTVF (82 aa)). Disordered regions lie at residues 97–120 (GGDS…PEGP) and 133–154 (ATEA…PGQP). Phosphoserine is present on Ser100. The HCFC1-binding motif (HBM) signature appears at 156–159 (DHSY).

In terms of assembly, component of a THAP1/THAP3-HCFC1-OGT complex that contains at least, either THAP1 or THAP3, HCFC1 and OGT. Interacts directly with OGT and HCFC1 (via its HBM). As to expression, highest levels in heart, liver and kidney. Lower levels in brain and lung.

In terms of biological role, component of a THAP1/THAP3-HCFC1-OGT complex that is required for the regulation of the transcriptional activity of RRM1. The polypeptide is THAP domain-containing protein 3 (Thap3) (Mus musculus (Mouse)).